The chain runs to 241 residues: Homeobox protein TGIF2LX (241 aa).

2 disordered regions span residues Met-1–Pro-58 and Lys-125–Ser-207. A compositionally biased stretch (polar residues) spans Glu-10–Asp-39. A DNA-binding region (homeobox; TALE-type) is located at residues Glu-48–Asp-111.

Belongs to the TALE/TGIF homeobox family.

The protein resides in the nucleus. Functionally, may have a transcription role in testis. The polypeptide is Homeobox protein TGIF2LX (TGIF2LX) (Pan troglodytes (Chimpanzee)).